Here is a 252-residue protein sequence, read N- to C-terminus: Glucosamine-6-phosphate deaminase (252 aa).

D67 acts as the Proton acceptor; for enolization step in catalysis. N137 (for ring-opening step) is an active-site residue. Catalysis depends on H139, which acts as the Proton acceptor; for ring-opening step. E144 acts as the For ring-opening step in catalysis.

Belongs to the glucosamine/galactosamine-6-phosphate isomerase family. NagB subfamily.

The enzyme catalyses alpha-D-glucosamine 6-phosphate + H2O = beta-D-fructose 6-phosphate + NH4(+). Its pathway is amino-sugar metabolism; N-acetylneuraminate degradation; D-fructose 6-phosphate from N-acetylneuraminate: step 5/5. Its function is as follows. Catalyzes the reversible isomerization-deamination of glucosamine 6-phosphate (GlcN6P) to form fructose 6-phosphate (Fru6P) and ammonium ion. This Staphylococcus aureus (strain MRSA252) protein is Glucosamine-6-phosphate deaminase.